The primary structure comprises 360 residues: Peptide chain release factor 1 (360 aa).

An N5-methylglutamine modification is found at Q235. Residues 285 to 313 form a disordered region; that stretch reads KRQQAEASTRRNLLGSGDRSDRNRTYNFP.

This sequence belongs to the prokaryotic/mitochondrial release factor family. Post-translationally, methylated by PrmC. Methylation increases the termination efficiency of RF1.

The protein localises to the cytoplasm. In terms of biological role, peptide chain release factor 1 directs the termination of translation in response to the peptide chain termination codons UAG and UAA. This Klebsiella pneumoniae (strain 342) protein is Peptide chain release factor 1.